A 282-amino-acid polypeptide reads, in one-letter code: MIYETAPAKINFTLDTLFKRNDGYHEIEMIMTTVDLNDRLTFHKRKDRKIVVEIEHNYVPSNHKNLAYRAAQLFIEQYQLKQGVTISIDKEIPVSAGLAGGSADAAATLRGLNRLFDIGASLEELALLGSKIGTDIPFCIYNKTALCTGRGEKIEFLNKPPSAWVILAKPNLGISSPDIFKLINLDKRYDVHTKMCYEALENRDYQQLCQSLSNRLEPISVSKHPQIDKLKNNMLKSGADGALMSGSGPTVYGLARKESQAKNIYNAVNGCCNEVYLVRLLG.

Lys-9 is a catalytic residue. 93–103 lines the ATP pocket; sequence PVSAGLAGGSA. Asp-135 is an active-site residue.

The protein belongs to the GHMP kinase family. IspE subfamily.

The enzyme catalyses 4-CDP-2-C-methyl-D-erythritol + ATP = 4-CDP-2-C-methyl-D-erythritol 2-phosphate + ADP + H(+). Functionally, catalyzes the phosphorylation of the position 2 hydroxy group of 4-diphosphocytidyl-2C-methyl-D-erythritol. This chain is Putative 4-diphosphocytidyl-2-C-methyl-D-erythritol kinase, found in Staphylococcus aureus (strain MSSA476).